Reading from the N-terminus, the 165-residue chain is Copper-resistant cuproprotein CopI (165 aa).

A signal peptide spans 1–23 (MKNRILRPALLCVAALFATTAQA). The segment covering 25–42 (AGHDHGSAHAGAHAHDAD) has biased composition (basic and acidic residues). A disordered region spans residues 25–50 (AGHDHGSAHAGAHAHDADTPYGRPGD). Residues H93, C148, H153, and M158 each contribute to the Cu(2+) site.

It belongs to the CopI family. Monomer.

Its subcellular location is the periplasm. In terms of biological role, involved in copper tolerance. Required for copper resistance under both aerobic and anaerobic photosynthetic growth conditions. Binds copper. Could be an important defense against copper in the periplasm and may protect not only c type cytochromes but also other proteins with cysteine residues from copper ions that may catalyze nonnative disulfide bond formation. This is Copper-resistant cuproprotein CopI from Rubrivivax gelatinosus (Rhodocyclus gelatinosus).